The following is a 218-amino-acid chain: tRNA (guanine-N(7)-)-methyltransferase (218 aa).

Positions 46, 71, 98, and 120 each coordinate S-adenosyl-L-methionine. The active site involves Asp-120. Lys-124 lines the substrate pocket. The tract at residues 126-131 is interaction with RNA; the sequence is RHEKRR. Substrate contacts are provided by residues Asp-156 and 196-199; that span reads TEYE.

It belongs to the class I-like SAM-binding methyltransferase superfamily. TrmB family.

It catalyses the reaction guanosine(46) in tRNA + S-adenosyl-L-methionine = N(7)-methylguanosine(46) in tRNA + S-adenosyl-L-homocysteine. It functions in the pathway tRNA modification; N(7)-methylguanine-tRNA biosynthesis. Catalyzes the formation of N(7)-methylguanine at position 46 (m7G46) in tRNA. The chain is tRNA (guanine-N(7)-)-methyltransferase from Lactobacillus johnsonii (strain CNCM I-12250 / La1 / NCC 533).